Reading from the N-terminus, the 90-residue chain is DNA-binding protein HU-alpha (90 aa).

It belongs to the bacterial histone-like protein family. Heterodimer of an alpha and a beta chain.

Its function is as follows. Histone-like DNA-binding protein which is capable of wrapping DNA to stabilize it, and thus to prevent its denaturation under extreme environmental conditions. The sequence is that of DNA-binding protein HU-alpha (hupA) from Escherichia coli O157:H7.